We begin with the raw amino-acid sequence, 500 residues long: Histidinol dehydrogenase homolog 1 (500 aa).

Residues 1 to 25 (MPPAGGIFHRPPTTRKSRRLTPRSA) are disordered. A compositionally biased stretch (basic residues) spans 12–21 (PTTRKSRRLT). Residues Gln313 and His316 each coordinate Zn(2+). Active-site proton acceptor residues include Glu381 and His382. Residues Asp415 and His475 each contribute to the Zn(2+) site.

Belongs to the histidinol dehydrogenase family. Zn(2+) serves as cofactor.

The sequence is that of Histidinol dehydrogenase homolog 1 from Mesorhizobium japonicum (strain LMG 29417 / CECT 9101 / MAFF 303099) (Mesorhizobium loti (strain MAFF 303099)).